We begin with the raw amino-acid sequence, 612 residues long: MFS siderochrome iron transporter B (612 aa).

The Cytoplasmic portion of the chain corresponds to 1–86; sequence MLHVLSVGPS…GAQAGVKKIE (86 aa). The segment at 55 to 78 is disordered; sequence DKEAAHAPANAETNNEEANPSDGA. The span at 60-72 shows a compositional bias: low complexity; it reads HAPANAETNNEEA. The helical transmembrane segment at 87-104 threads the bilayer; sequence AVTLSWTRGTAIWFLTLV. Topologically, residues 105–127 are extracellular; it reads NDFRLSMYTSLNAYATSSFLGHS. The helical transmembrane segment at 128 to 148 threads the bilayer; it reads LLTVINIVSYVMGGSVYIPMA. Residues 149–156 are Cytoplasmic-facing; it reads KALDLWGR. A helical membrane pass occupies residues 157 to 177; sequence AEGFLLMTFFCILGLILLASS. Over 178–187 the chain is Extracellular; that stretch reads QNLPTYCAGQ. A helical transmembrane segment spans residues 188 to 208; the sequence is VFYKVGFGGLSYTWNVLAADV. Over 209–215 the chain is Cytoplasmic; the sequence is TNLRNRG. The helical transmembrane segment at 216–236 threads the bilayer; sequence LAFAFTSSPALISAFAGSKAA. At 237–246 the chain is on the extracellular side; the sequence is SDLLAHSTWR. Residues 247 to 267 traverse the membrane as a helical segment; sequence WGFGMWAIILPVVALPIYGLL. The Cytoplasmic segment spans residues 268 to 302; sequence AYHLRQAEKKGVLVKETRDWSITPKTVWWAIMEFD. The chain crosses the membrane as a helical span at residues 303 to 323; it reads LPGVLLFAGGFVIFLLPFTLA. Residues 324–334 are Extracellular-facing; sequence ATAPHGYQTDY. A helical membrane pass occupies residues 335 to 355; it reads IIAMITLGLALIIAFGFYEML. Topologically, residues 356-370 are cytoplasmic; the sequence is VAPVPFLNYKFLIDR. The helical transmembrane segment at 371–393 threads the bilayer; it reads TVLGACLLDMTYQVSYYCYASYL. Topologically, residues 394–409 are extracellular; the sequence is PSFLQVVYELDVATAG. Residues 410–430 traverse the membrane as a helical segment; it reads YVTNTFSVVSFVFLFFAGWLI. The Cytoplasmic portion of the chain corresponds to 431-435; that stretch reads RWTGR. A helical membrane pass occupies residues 436–456; sequence FKWILWVCVPLYIFGLGLMIH. The Extracellular portion of the chain corresponds to 457–463; that stretch reads FRQPGGY. Residues 464-484 form a helical membrane-spanning segment; it reads IGYIVMCEIFFSVAGSVFILC. The Cytoplasmic segment spans residues 485 to 498; the sequence is VQLAVLASVDHQHV. The helical transmembrane segment at 499-519 threads the bilayer; that stretch reads AAVLALLFVMGSIGGSIGSAI. Over 520 to 575 the chain is Extracellular; sequence CGAIWTSTFLSRLERNLPASAMPDLSLIYSSLPTQLSYPVGSATRTAIVEAYGYAQ. The chain crosses the membrane as a helical span at residues 576–596; sequence ARMLIAGTAFMVLGFIWVGMM. The Cytoplasmic segment spans residues 597 to 612; sequence RNLNVKNMTQTKGNVV.

It belongs to the major facilitator superfamily.

Its subcellular location is the cell tip. It localises to the cytoplasmic vesicle membrane. It is found in the cell membrane. In terms of biological role, major facilitator transporter involved in triacetylfusarinine C (TAFC) uptake. Can also transport ferricrocin and coprogen, but not ferrichrysin. MirB plays a crucial role for virulence in a murine model of pulmonary aspergillosis, indicating that TAFC-mediated iron uptake plays a dominant role during infection. The protein is MFS siderochrome iron transporter B of Aspergillus fumigatus (strain ATCC MYA-4609 / CBS 101355 / FGSC A1100 / Af293) (Neosartorya fumigata).